The chain runs to 755 residues: Elongation factor G, mitochondrial (755 aa).

A mitochondrion-targeting transit peptide spans 1–38 (MFKRVGLIAGIAGPVAGSSRFSAVSFSKRAFSASSKRC). Positions 63-344 (KKLRNIGISA…AIVEYLPNPS (282 aa)) constitute a tr-type G domain. GTP-binding positions include 72-79 (AHIDSGKT), 143-147 (DTPGH), and 197-200 (NKMD).

The protein belongs to the TRAFAC class translation factor GTPase superfamily. Classic translation factor GTPase family. EF-G/EF-2 subfamily.

The protein resides in the mitochondrion. Its pathway is protein biosynthesis; polypeptide chain elongation. In terms of biological role, mitochondrial GTPase that catalyzes the GTP-dependent ribosomal translocation step during translation elongation. During this step, the ribosome changes from the pre-translocational (PRE) to the post-translocational (POST) state as the newly formed A-site-bound peptidyl-tRNA and P-site-bound deacylated tRNA move to the P and E sites, respectively. Catalyzes the coordinated movement of the two tRNA molecules, the mRNA and conformational changes in the ribosome. The protein is Elongation factor G, mitochondrial of Kluyveromyces lactis (strain ATCC 8585 / CBS 2359 / DSM 70799 / NBRC 1267 / NRRL Y-1140 / WM37) (Yeast).